Consider the following 221-residue polypeptide: HTH-type transcriptional regulator McbR (221 aa).

The HTH gntR-type domain occupies 10 to 77 (VSLTLQVEND…PAQAFTVPEV (68 aa)). The segment at residues 37–56 (TKNLAEQLGMSITPVREALL) is a DNA-binding region (H-T-H motif).

Its function is as follows. Important for biofilm formation. Represses expression of McbA by binding to its promoter region, which prevents colanic acid overproduction and mucoidy. This chain is HTH-type transcriptional regulator McbR (mcbR), found in Escherichia coli (strain K12).